The following is a 314-amino-acid chain: Ribosomal RNA small subunit methyltransferase H 2 (314 aa).

S-adenosyl-L-methionine contacts are provided by residues 33–35, Asp53, Tyr80, Asp101, and Gln108; that span reads AGH. The tract at residues 293-314 is disordered; the sequence is KELEENSRSKSAKLRVFEKNDL.

This sequence belongs to the methyltransferase superfamily. RsmH family.

It is found in the cytoplasm. It catalyses the reaction cytidine(1402) in 16S rRNA + S-adenosyl-L-methionine = N(4)-methylcytidine(1402) in 16S rRNA + S-adenosyl-L-homocysteine + H(+). In terms of biological role, specifically methylates the N4 position of cytidine in position 1402 (C1402) of 16S rRNA. This is Ribosomal RNA small subunit methyltransferase H 2 from Agathobacter rectalis (strain ATCC 33656 / DSM 3377 / JCM 17463 / KCTC 5835 / VPI 0990) (Eubacterium rectale).